Consider the following 31-residue polypeptide: GTLPCGESCVWIPCISAAVGCSCKSKVCYKN.

A cross-link (cyclopeptide (Gly-Asn)) is located at residues 1-31; the sequence is GTLPCGESCVWIPCISAAVGCSCKSKVCYKN. Cystine bridges form between Cys5-Cys21, Cys9-Cys23, and Cys14-Cys28.

Post-translationally, this is a cyclic peptide.

Probably participates in a plant defense mechanism. The polypeptide is Cycloviolacin-O6 (Viola odorata (Sweet violet)).